The primary structure comprises 172 residues: Large ribosomal subunit protein uL10 (172 aa).

It belongs to the universal ribosomal protein uL10 family. As to quaternary structure, part of the ribosomal stalk of the 50S ribosomal subunit. The N-terminus interacts with L11 and the large rRNA to form the base of the stalk. The C-terminus forms an elongated spine to which L12 dimers bind in a sequential fashion forming a multimeric L10(L12)X complex.

Forms part of the ribosomal stalk, playing a central role in the interaction of the ribosome with GTP-bound translation factors. This is Large ribosomal subunit protein uL10 from Macrococcus caseolyticus (strain JCSC5402) (Macrococcoides caseolyticum).